A 374-amino-acid polypeptide reads, in one-letter code: (R)-phenyllactyl-CoA dehydratase beta subunit (374 aa).

It belongs to the FldB/FldC dehydratase alpha/beta subunit family. Part of the heterotrimeric phenyllactate dehydratase complex FldABC, composed of (R)-phenyllactate CoA-transferase (FldA) and a heterodimeric (R)-phenyllactyl-CoA dehydratase (FldB and FldC). [4Fe-4S] cluster serves as cofactor. The cofactor is No flavin could be detected in the FldABC complex, and the addition of FAD, FMN or riboflavin to the dehydratase do not increase enzymatic activity..

The enzyme catalyses (R)-3-phenyllactoyl-CoA = (E)-cinnamoyl-CoA + H2O. The catalysed reaction is (R)-3-(4-hydroxyphenyl)lactoyl-CoA = (E)-4-coumaroyl-CoA + H2O. It carries out the reaction (R)-3-(indol-3-yl)lactoyl-CoA = (E)-3-(indol-3-yl)acryloyl-CoA + H2O. Its pathway is amino-acid degradation; L-phenylalanine degradation. Its function is as follows. Component of the phenyllactate dehydratase complex FldABC that is involved in the fermentation of L-phenylalanine via a Stickland reaction. This complex catalyzes the reversible syn-dehydration of (R)-phenyllactate to (E)-cinnamate in two steps, a CoA-transfer from cinnamoyl-CoA to phenyllactate, catalyzed by FldA, followed by the dehydration of phenyllactyl-CoA to cinnamoyl-CoA, catalyzed by FldB and FldC. Requires the activator FldI to initiate catalysis. The polypeptide is (R)-phenyllactyl-CoA dehydratase beta subunit (Clostridium sporogenes).